The following is a 532-amino-acid chain: Flavin-containing monooxygenase 1 (532 aa).

A2 carries the post-translational modification N-acetylalanine. Over 2–510 (AKRVAIVGAG…TRIVQESPTP (509 aa)) the chain is Lumenal. Residues 9–13 (GAGVS), E32, 40–41 (LW), and 61–62 (NS) contribute to the FAD site. Residues 60–61 (SN) and 195–198 (SGTD) contribute to the NADP(+) site. The helical transmembrane segment at 511–531 (FASLLKLLSLLALLMAIFLIF) threads the bilayer. L532 is a topological domain (cytoplasmic).

This sequence belongs to the FMO family. Requires FAD as cofactor. In terms of tissue distribution, liver.

It is found in the endoplasmic reticulum membrane. It carries out the reaction hypotaurine + NADPH + O2 + H(+) = taurine + NADP(+) + H2O. The enzyme catalyses hypotaurine + NADH + O2 + H(+) = taurine + NAD(+) + H2O. The catalysed reaction is trimethylamine + NADPH + O2 = trimethylamine N-oxide + NADP(+) + H2O. It catalyses the reaction N,N-dimethylaniline + NADPH + O2 + H(+) = N,N-dimethylaniline N-oxide + NADP(+) + H2O. Broad spectrum monooxygenase that catalyzes the oxygenation of a wide variety of nitrogen- and sulfur-containing compounds including xenobiotics. Catalyzes the S-oxygenation of hypotaurine to produce taurine, an organic osmolyte involved in cell volume regulation as well as a variety of cytoprotective and developmental processes. In vitro, catalyzes the N-oxygenation of trimethylamine (TMA) to produce trimethylamine N-oxide (TMAO) and could therefore participate to the detoxification of this compound that is generated by the action of gut microbiota from dietary precursors such as choline, choline containing compounds, betaine or L-carnitine. In Canis lupus familiaris (Dog), this protein is Flavin-containing monooxygenase 1 (FMO1).